The primary structure comprises 263 residues: Ribonuclease HII (263 aa).

In terms of domain architecture, RNase H type-2 spans 71–262; that stretch reads KAIAGIDEVG…VKSMCCDSTN (192 aa). A divalent metal cation contacts are provided by D77, E78, and D172.

This sequence belongs to the RNase HII family. It depends on Mn(2+) as a cofactor. Mg(2+) serves as cofactor.

The protein localises to the cytoplasm. It carries out the reaction Endonucleolytic cleavage to 5'-phosphomonoester.. Its function is as follows. Endonuclease that specifically degrades the RNA of RNA-DNA hybrids. This Streptococcus pyogenes serotype M1 protein is Ribonuclease HII.